A 291-amino-acid polypeptide reads, in one-letter code: ATP synthase gamma chain (291 aa).

The protein belongs to the ATPase gamma chain family. As to quaternary structure, F-type ATPases have 2 components, CF(1) - the catalytic core - and CF(0) - the membrane proton channel. CF(1) has five subunits: alpha(3), beta(3), gamma(1), delta(1), epsilon(1). CF(0) has three main subunits: a, b and c.

Its subcellular location is the cell inner membrane. Its function is as follows. Produces ATP from ADP in the presence of a proton gradient across the membrane. The gamma chain is believed to be important in regulating ATPase activity and the flow of protons through the CF(0) complex. In Chlorobium limicola (strain DSM 245 / NBRC 103803 / 6330), this protein is ATP synthase gamma chain.